The following is a 272-amino-acid chain: Formamidopyrimidine-DNA glycosylase (272 aa).

The active-site Schiff-base intermediate with DNA is the P2. E3 serves as the catalytic Proton donor. K58 (proton donor; for beta-elimination activity) is an active-site residue. Residues H93, R112, and R153 each coordinate DNA. An FPG-type zinc finger spans residues 238–272 (HVYGKSGQHCPKCGNILEDLKISNRGTVYCPHCQR). Residue R262 is the Proton donor; for delta-elimination activity of the active site.

The protein belongs to the FPG family. Monomer. Requires Zn(2+) as cofactor.

It catalyses the reaction Hydrolysis of DNA containing ring-opened 7-methylguanine residues, releasing 2,6-diamino-4-hydroxy-5-(N-methyl)formamidopyrimidine.. The catalysed reaction is 2'-deoxyribonucleotide-(2'-deoxyribose 5'-phosphate)-2'-deoxyribonucleotide-DNA = a 3'-end 2'-deoxyribonucleotide-(2,3-dehydro-2,3-deoxyribose 5'-phosphate)-DNA + a 5'-end 5'-phospho-2'-deoxyribonucleoside-DNA + H(+). Its function is as follows. Involved in base excision repair of DNA damaged by oxidation or by mutagenic agents. Acts as a DNA glycosylase that recognizes and removes damaged bases. Has a preference for oxidized purines, such as 7,8-dihydro-8-oxoguanine (8-oxoG). Has AP (apurinic/apyrimidinic) lyase activity and introduces nicks in the DNA strand. Cleaves the DNA backbone by beta-delta elimination to generate a single-strand break at the site of the removed base with both 3'- and 5'-phosphates. The polypeptide is Formamidopyrimidine-DNA glycosylase (Dichelobacter nodosus (strain VCS1703A)).